The sequence spans 324 residues: tRNA(Ile)-lysidine synthase (324 aa).

Position 33 to 38 (33 to 38 (SGGPDS)) interacts with ATP.

This sequence belongs to the tRNA(Ile)-lysidine synthase family.

The protein resides in the cytoplasm. The enzyme catalyses cytidine(34) in tRNA(Ile2) + L-lysine + ATP = lysidine(34) in tRNA(Ile2) + AMP + diphosphate + H(+). Its function is as follows. Ligates lysine onto the cytidine present at position 34 of the AUA codon-specific tRNA(Ile) that contains the anticodon CAU, in an ATP-dependent manner. Cytidine is converted to lysidine, thus changing the amino acid specificity of the tRNA from methionine to isoleucine. The chain is tRNA(Ile)-lysidine synthase from Thermobifida fusca (strain YX).